The primary structure comprises 919 residues: Alanine--tRNA ligase (919 aa).

Zn(2+) contacts are provided by His565, His569, Cys667, and His671.

Belongs to the class-II aminoacyl-tRNA synthetase family. It depends on Zn(2+) as a cofactor.

It is found in the cytoplasm. The catalysed reaction is tRNA(Ala) + L-alanine + ATP = L-alanyl-tRNA(Ala) + AMP + diphosphate. Functionally, catalyzes the attachment of alanine to tRNA(Ala) in a two-step reaction: alanine is first activated by ATP to form Ala-AMP and then transferred to the acceptor end of tRNA(Ala). Also edits incorrectly charged Ser-tRNA(Ala) and Gly-tRNA(Ala) via its editing domain. In Leptospira biflexa serovar Patoc (strain Patoc 1 / Ames), this protein is Alanine--tRNA ligase.